A 160-amino-acid chain; its full sequence is MQRVSGLLSWTLSRVLWLSGLSEPGAARQPRIMEEKALEVYDLIRTIRDPEKPNTLEELEVVSESCVEVQEINEEEYLVIIRFTPTVPHCSLATLIGLCLRVKLQRCLPFKHKLEIYISEGTHSTEEDINKQINDKERVAAAMENPNLREIVEQCVLEPD.

4 residues coordinate Zn(2+): H89, H123, E150, and E153.

The protein belongs to the MIP18 family. As to quaternary structure, monomer and homodimer. Component of the CIA complex. Interacts with CIAO1. Interacts with IREB2. Interacts with APAF1. In terms of tissue distribution, substantially enriched in macrophages.

It localises to the cytoplasm. In terms of biological role, component of the cytosolic iron-sulfur protein assembly (CIA) complex, a multiprotein complex that mediates the incorporation of iron-sulfur cluster into extramitochondrial Fe/S proteins. As a CIA complex component and in collaboration with CIAO1 specifically matures ACO1 and stabilizes IREB2, connecting cytosolic iron-sulfur protein maturation with cellular iron regulation. May play a role in chromosome segregation through establishment of sister chromatid cohesion. May induce apoptosis in collaboration with APAF1. The protein is Cytosolic iron-sulfur assembly component 2A of Homo sapiens (Human).